A 262-amino-acid polypeptide reads, in one-letter code: Chondroitin proteoglycan 3 (262 aa).

Positions 1-17 (MRSSFIFALLLIGAALA) are cleaved as a signal peptide. The tract at residues 37-68 (FSGEASGEASGEASGEFSGEGSGEGSGELSPE) is disordered. Positions 39-53 (GEASGEASGEASGEF) are enriched in low complexity. N-linked (GlcNAc...) asparagine glycans are attached at residues Asn-140, Asn-148, and Asn-224.

This chain is Chondroitin proteoglycan 3 (cpg-3), found in Caenorhabditis briggsae.